A 378-amino-acid chain; its full sequence is UPF0754 membrane protein Bcer98_0694 (378 aa).

A helical transmembrane segment spans residues 358-378 (LGALLGGTIGLMQGILLLFLM).

This sequence belongs to the UPF0754 family.

Its subcellular location is the cell membrane. In Bacillus cytotoxicus (strain DSM 22905 / CIP 110041 / 391-98 / NVH 391-98), this protein is UPF0754 membrane protein Bcer98_0694.